The primary structure comprises 465 residues: 3-isopropylmalate dehydratase large subunit (465 aa).

[4Fe-4S] cluster is bound by residues Cys-347, Cys-407, and Cys-410.

This sequence belongs to the aconitase/IPM isomerase family. LeuC type 1 subfamily. In terms of assembly, heterodimer of LeuC and LeuD. [4Fe-4S] cluster is required as a cofactor.

It catalyses the reaction (2R,3S)-3-isopropylmalate = (2S)-2-isopropylmalate. It functions in the pathway amino-acid biosynthesis; L-leucine biosynthesis; L-leucine from 3-methyl-2-oxobutanoate: step 2/4. Its function is as follows. Catalyzes the isomerization between 2-isopropylmalate and 3-isopropylmalate, via the formation of 2-isopropylmaleate. The chain is 3-isopropylmalate dehydratase large subunit from Aeromonas hydrophila subsp. hydrophila (strain ATCC 7966 / DSM 30187 / BCRC 13018 / CCUG 14551 / JCM 1027 / KCTC 2358 / NCIMB 9240 / NCTC 8049).